The chain runs to 409 residues: Arginine deiminase (409 aa).

The active-site Amidino-cysteine intermediate is the cysteine 399.

Belongs to the arginine deiminase family.

It is found in the cytoplasm. It carries out the reaction L-arginine + H2O = L-citrulline + NH4(+). Its pathway is amino-acid degradation; L-arginine degradation via ADI pathway; carbamoyl phosphate from L-arginine: step 1/2. This chain is Arginine deiminase, found in Streptococcus gordonii (strain Challis / ATCC 35105 / BCRC 15272 / CH1 / DL1 / V288).